We begin with the raw amino-acid sequence, 104 residues long: Large ribosomal subunit protein bL21 (104 aa).

The protein belongs to the bacterial ribosomal protein bL21 family. As to quaternary structure, part of the 50S ribosomal subunit. Contacts protein L20.

Its function is as follows. This protein binds to 23S rRNA in the presence of protein L20. This Helicobacter pylori (strain Shi470) protein is Large ribosomal subunit protein bL21.